A 196-amino-acid polypeptide reads, in one-letter code: ECF RNA polymerase sigma factor SigM (196 aa).

Residues 39 to 105 (LFRRHHRQLH…ACLDRLRRAK (67 aa)) form a sigma-70 factor domain-2 region. The Polymerase core binding motif lies at 63-66 (DALQ). The interval 130 to 181 (AVQRALMRLPVEQRAAVVAVDMQGYSIADTARMLGVAEGTVKSRCARARARL) is sigma-70 factor domain-4. A DNA-binding region (H-T-H motif) is located at residues 156 to 175 (IADTARMLGVAEGTVKSRCA).

It belongs to the sigma-70 factor family. ECF subfamily. In terms of assembly, interacts transiently with the RNA polymerase catalytic core formed by RpoA, RpoB, RpoC and RpoZ (2 alpha, 1 beta, 1 beta' and 1 omega subunit) to form the RNA polymerase holoenzyme that can initiate transcription. Interacts (via sigma-70 factor domain-4) with anti-sigma-M factor RsmA (AC L7N5D7).

Its function is as follows. Sigma factors are initiation factors that promote the attachment of RNA polymerase to specific initiation sites and are then released. Extracytoplasmic function (ECF) sigma factors are held in an inactive form by an anti-sigma factor (RsaM, AC L7N5D7) until released by regulated intramembrane proteolysis. This sigma factor is required for the synthesis of surface or secreted molecules. This is ECF RNA polymerase sigma factor SigM (sigM) from Mycobacterium tuberculosis (strain ATCC 25618 / H37Rv).